A 265-amino-acid polypeptide reads, in one-letter code: Deoxycytidine kinase 2 (265 aa).

An ATP-binding site is contributed by 31 to 39; that stretch reads GNIAAGKST. Positions 56, 89, and 100 each coordinate substrate. Glu-130 functions as the Proton acceptor in the catalytic mechanism. 2 residues coordinate substrate: Arg-131 and Asp-136. Position 191–195 (191–195) interacts with ATP; that stretch reads RLQKR. Residue Glu-200 participates in substrate binding. Position 243–245 (243–245) interacts with ATP; that stretch reads EDF.

Belongs to the DCK/DGK family. In terms of assembly, homodimer. In terms of tissue distribution, expressed at high levels in adult intestine, spleen, thymus and testis with lower levels in skeletal muscle and eye. In the embryo, expressed at higher levels until day 10 with lower levels in later stages.

It is found in the nucleus. The catalysed reaction is 2'-deoxycytidine + a ribonucleoside 5'-triphosphate = dCMP + a ribonucleoside 5'-diphosphate + H(+). It catalyses the reaction 2'-deoxyguanosine + ATP = dGMP + ADP + H(+). It carries out the reaction 2'-deoxyadenosine + ATP = dAMP + ADP + H(+). Its function is as follows. Phosphorylates the deoxyribonucleosides deoxyadenosine, deoxycytidine and deoxyguanosine. Shows highest activity against deoxyguanosine followed by deoxycytidine and then deoxyadenosine. Shows only very minor activity against deoxyuridine and deoxythymidine. The sequence is that of Deoxycytidine kinase 2 from Gallus gallus (Chicken).